Reading from the N-terminus, the 380-residue chain is MPDEFTVTPWEVKGKVDYDKLIVQFGTQKITEELKQRIKNLAGDLHVMLRRNVFFSHRDLDLVLNDYEKSKGFFLYTGRAPSLGMHIGHLIPFIFTKWLQEKFNANLYIEITDDEKYMRNPEFTLDQTRSWAYDNILDIIAVGFNPDKTFIFQDTEYIRNMYPITVKIAKKLTFSEVRATFGLDASSNIGLIFYPALQIAPTMFEKKRCLIPAGIDQDPYWRLQRDIAESLGYYKAAQIHSKFLPPLTGPEGKMSSSNPETAIYLVDDPKTVERKIMKYAFSGGQPTIELHRKYGGNPEIDVPFQWLYYFFEEDDNRIKEIEEEYRSGKMLTGELKQILIDKLNNFLEEHRRRREEAKELVHVFKYDGKLAKQMWEKIHE.

Residues 81 to 89 carry the 'HIGH' region motif; it reads PSLGMHIGH. Residues 253 to 257 carry the 'KMSKS' region motif; the sequence is KMSSS.

The protein belongs to the class-I aminoacyl-tRNA synthetase family.

The protein localises to the cytoplasm. It carries out the reaction tRNA(Trp) + L-tryptophan + ATP = L-tryptophyl-tRNA(Trp) + AMP + diphosphate + H(+). The protein is Tryptophan--tRNA ligase of Saccharolobus solfataricus (strain ATCC 35092 / DSM 1617 / JCM 11322 / P2) (Sulfolobus solfataricus).